A 371-amino-acid chain; its full sequence is Cytochrome b (371 aa).

Helical transmembrane passes span 25-45 (FGSMLLTCLALQVLTGFFLAV), 69-90 (WMMQNLHAIGASMFFICIYIHI), 105-125 (WMSGITLLITLMATAFFGYVL), and 170-190 (FFALHFILPFAIISLSSLHVI). Histidine 75 and histidine 89 together coordinate heme b. Positions 174 and 188 each coordinate heme b. Histidine 193 is a binding site for a ubiquinone. 4 helical membrane-spanning segments follow: residues 218 to 238 (YKDFLLLTLMVLSLFIIVSFF), 280 to 300 (LGGALALVMSIMILFTIPFTH), 312 to 332 (LYQLMFWTLVSTFITITWAAT), and 339 to 358 (FITISQVTSTLYFTFFISIP).

The protein belongs to the cytochrome b family. In terms of assembly, the cytochrome bc1 complex contains 3 respiratory subunits (MT-CYB, CYC1 and UQCRFS1), 2 core proteins (UQCRC1 and UQCRC2) and probably 6 low-molecular weight proteins. Heme b is required as a cofactor.

The protein resides in the mitochondrion inner membrane. Functionally, component of the ubiquinol-cytochrome c reductase complex (complex III or cytochrome b-c1 complex) that is part of the mitochondrial respiratory chain. The b-c1 complex mediates electron transfer from ubiquinol to cytochrome c. Contributes to the generation of a proton gradient across the mitochondrial membrane that is then used for ATP synthesis. The polypeptide is Cytochrome b (MT-CYB) (Malayopython reticulatus (Reticulate python)).